The primary structure comprises 234 residues: Ubiquinone biosynthesis O-methyltransferase (234 aa).

4 residues coordinate S-adenosyl-L-methionine: arginine 40, glycine 59, aspartate 80, and methionine 123.

Belongs to the methyltransferase superfamily. UbiG/COQ3 family.

It catalyses the reaction a 3-demethylubiquinol + S-adenosyl-L-methionine = a ubiquinol + S-adenosyl-L-homocysteine + H(+). The catalysed reaction is a 3-(all-trans-polyprenyl)benzene-1,2-diol + S-adenosyl-L-methionine = a 2-methoxy-6-(all-trans-polyprenyl)phenol + S-adenosyl-L-homocysteine + H(+). Its pathway is cofactor biosynthesis; ubiquinone biosynthesis. Functionally, O-methyltransferase that catalyzes the 2 O-methylation steps in the ubiquinone biosynthetic pathway. This is Ubiquinone biosynthesis O-methyltransferase from Coxiella burnetii (strain Dugway 5J108-111).